Reading from the N-terminus, the 442-residue chain is Mimosinase, chloroplastic (442 aa).

Residues 1-35 (MALPSAFLNPFVPSPVTANPRTKFARVGKGFNVSC) constitute a chloroplast transit peptide. The pyridoxal 5'-phosphate site is built by Tyr103, Arg105, Gly133, Met134, Ser252, and Thr254. Lys255 carries the post-translational modification N6-(pyridoxal phosphate)lysine.

This sequence belongs to the trans-sulfuration enzymes family. As to quaternary structure, forms homodimers. May form homotetramers from two homodimers. Pyridoxal 5'-phosphate is required as a cofactor.

It is found in the plastid. The protein resides in the chloroplast. The enzyme catalyses L-mimosine + H2O = 3-hydroxy-4H-pyrid-4-one + pyruvate + NH4(+). The catalysed reaction is L,L-cystathionine + H2O = L-homocysteine + pyruvate + NH4(+). It catalyses the reaction an S-substituted L-cysteine + H2O = a thiol + pyruvate + NH4(+). Its function is as follows. Catalyzes the degradation of mimosine, which is a toxic secondary metabolite found in all Mimosa and Leucaena species. Catalyzes the degradation of cystathionine, but seems to have lower preference toward cystathionine over mimosine. In Mimosa pudica (Sensitive plant), this protein is Mimosinase, chloroplastic.